Here is a 239-residue protein sequence, read N- to C-terminus: MERPQNRGNDQMRTVRIIPGFQKYPDGSVLIEAGDTRVMCSAMMEEKVPPFLRGKGSGWVTAEYSLLPSSTETRTQREASKGKISGRTSEIQRLIGRSLRAVVDMPAMGERTLWIDCDVLQADGGTRTAAITGSFVALYLAFKKFKEQGIIETIPVKDFVAAISVGIIDGTPILDLEYIEDSQADVDMNVVMTGNGDFIEIQGTAEGTVFSRAELDQLLELAGKGIQELIALQKTILGV.

Phosphate is bound by residues R87 and 125–127; that span reads GTR.

Belongs to the RNase PH family. As to quaternary structure, homohexameric ring arranged as a trimer of dimers.

The enzyme catalyses tRNA(n+1) + phosphate = tRNA(n) + a ribonucleoside 5'-diphosphate. Phosphorolytic 3'-5' exoribonuclease that plays an important role in tRNA 3'-end maturation. Removes nucleotide residues following the 3'-CCA terminus of tRNAs; can also add nucleotides to the ends of RNA molecules by using nucleoside diphosphates as substrates, but this may not be physiologically important. Probably plays a role in initiation of 16S rRNA degradation (leading to ribosome degradation) during starvation. The polypeptide is Ribonuclease PH (Syntrophomonas wolfei subsp. wolfei (strain DSM 2245B / Goettingen)).